The sequence spans 983 residues: Ephrin type-A receptor 3 (983 aa).

The signal sequence occupies residues 1–20 (MDCQLSILLLLSCSVLDSFG). Topologically, residues 21 to 541 (ELIPQPSNEV…SFSISGESSQ (521 aa)) are extracellular. The Eph LBD domain occupies 29–207 (EVNLLDSKTI…YFKKCPFTVK (179 aa)). Asn-232, Asn-337, Asn-391, Asn-404, and Asn-493 each carry an N-linked (GlcNAc...) asparagine glycan. 2 consecutive Fibronectin type-III domains span residues 325–435 (PPSS…TNQA) and 436–531 (APSP…TSPD). The helical transmembrane segment at 542-565 (VVMIAISAAVAIILLTVVIYVLIG) threads the bilayer. The Cytoplasmic portion of the chain corresponds to 566-983 (RFCGYKSKHG…TQSKNGPVPV (418 aa)). 2 positions are modified to phosphotyrosine; by autocatalysis: Tyr-596 and Tyr-602. Positions 621–882 (ISIDKVVGAG…QIVSILDKLI (262 aa)) constitute a Protein kinase domain. ATP-binding positions include 628 to 633 (GAGEFG), Lys-653, and 700 to 706 (EYMENGS). Tyr-701 is modified (phosphotyrosine; by autocatalysis). Asp-746 functions as the Proton acceptor in the catalytic mechanism. 750 to 751 (RN) contributes to the ATP binding site. Tyr-779 carries the post-translational modification Phosphotyrosine; by autocatalysis. The SAM domain maps to 911–975 (TTFRTTGDWL…ISSIKALETQ (65 aa)). Tyr-937 is subject to Phosphotyrosine. The PDZ-binding motif lies at 981–983 (VPV).

It belongs to the protein kinase superfamily. Tyr protein kinase family. Ephrin receptor subfamily. Heterotetramer upon binding of the ligand. The heterotetramer is composed of an ephrin dimer and a receptor dimer. Oligomerization is probably required to induce biological responses. Forms a ternary EFNA5-EPHA3-ADAM10 complex mediating EFNA5 extracellular domain shedding by ADAM10 which regulates the EFNA5-EPHA3 complex internalization and function. Interacts with NCK1 (via SH2 domain); mediates EFNA5-EPHA3 signaling. Interacts (phosphorylated) with PTPN1; dephosphorylates EPHA3 and may regulate its trafficking and function. Interacts (phosphorylated) with CRK; mediates EFNA5-EPHA3 signaling through RHOA GTPase activation. Post-translationally, autophosphorylates upon activation by EFNA5. Phosphorylation on Tyr-602 mediates interaction with NCK1. Dephosphorylated by PTPN1. As to expression, widely expressed. Highest level in placenta.

Its subcellular location is the cell membrane. The protein localises to the secreted. The enzyme catalyses L-tyrosyl-[protein] + ATP = O-phospho-L-tyrosyl-[protein] + ADP + H(+). Receptor tyrosine kinase which binds promiscuously membrane-bound ephrin family ligands residing on adjacent cells, leading to contact-dependent bidirectional signaling into neighboring cells. The signaling pathway downstream of the receptor is referred to as forward signaling while the signaling pathway downstream of the ephrin ligand is referred to as reverse signaling. Highly promiscuous for ephrin-A ligands it binds preferentially EFNA5. Upon activation by EFNA5 regulates cell-cell adhesion, cytoskeletal organization and cell migration. Plays a role in cardiac cells migration and differentiation and regulates the formation of the atrioventricular canal and septum during development probably through activation by EFNA1. Involved in the retinotectal mapping of neurons. May also control the segregation but not the guidance of motor and sensory axons during neuromuscular circuit development. This Homo sapiens (Human) protein is Ephrin type-A receptor 3 (EPHA3).